We begin with the raw amino-acid sequence, 478 residues long: Serralysin C (478 aa).

Positions 1-17 (MEKNLSSRDDDALHSLS) are excised as a propeptide. Residue His-187 participates in Zn(2+) binding. Glu-188 is an active-site residue. Zn(2+) is bound by residues His-191 and Tyr-227. Positions 264, 266, 296, 298, 299, 301, 338, 340, 345, 347, 349, 354, 356, 358, 362, 363, 364, 365, 367, 371, 372, 374, 376, 380, 381, 383, 385, 394, 401, and 411 each coordinate Ca(2+). 2 Hemolysin-type calcium-binding repeats span residues 343–360 (IGGSGNDLLIGNNADNTL) and 361–378 (RGGAGDDVLFGGSGADRL).

This sequence belongs to the peptidase M10B family. Ca(2+) serves as cofactor. Zn(2+) is required as a cofactor.

The protein localises to the secreted. The enzyme catalyses Preferential cleavage of bonds with hydrophobic residues in P1'.. This chain is Serralysin C (prtC), found in Dickeya chrysanthemi (Pectobacterium chrysanthemi).